Reading from the N-terminus, the 197-residue chain is Imidazoleglycerol-phosphate dehydratase (197 aa).

Belongs to the imidazoleglycerol-phosphate dehydratase family.

It is found in the cytoplasm. It catalyses the reaction D-erythro-1-(imidazol-4-yl)glycerol 3-phosphate = 3-(imidazol-4-yl)-2-oxopropyl phosphate + H2O. The protein operates within amino-acid biosynthesis; L-histidine biosynthesis; L-histidine from 5-phospho-alpha-D-ribose 1-diphosphate: step 6/9. The sequence is that of Imidazoleglycerol-phosphate dehydratase from Halorhodospira halophila (strain DSM 244 / SL1) (Ectothiorhodospira halophila (strain DSM 244 / SL1)).